Here is a 1112-residue protein sequence, read N- to C-terminus: Carbamoyl phosphate synthase large chain (1112 aa).

The carboxyphosphate synthetic domain stretch occupies residues 1-407 (MPRRTDLRHV…ALGKVMRSLE (407 aa)). Residues R134, R174, G180, G181, E213, I215, E220, G246, V247, H248, Q290, and E304 each contribute to the ATP site. Residues 138–333 (KDIVTKVGGE…IAKIAAKLAI (196 aa)) enclose the ATP-grasp 1 domain. Mg(2+) is bound by residues Q290, E304, and N306. 3 residues coordinate Mn(2+): Q290, E304, and N306. The interval 408–559 (TGRAGFWTAP…ELDPAAESEV (152 aa)) is oligomerization domain. Positions 560–965 (APQAERPKVL…AFAKSQTAAY (406 aa)) are carbamoyl phosphate synthetic domain. The ATP-grasp 2 domain maps to 693–884 (GEVLRTAGLP…LAKACARIML (192 aa)). The ATP site is built by R729, R768, L770, E775, G800, I801, H802, S803, Q843, and E855. Positions 843, 855, and 857 each coordinate Mg(2+). 3 residues coordinate Mn(2+): Q843, E855, and N857. Residues 966 to 1112 (GSLPSEGTVF…LQELHSELGN (147 aa)) enclose the MGS-like domain. The tract at residues 966-1112 (GSLPSEGTVF…LQELHSELGN (147 aa)) is allosteric domain.

This sequence belongs to the CarB family. As to quaternary structure, composed of two chains; the small (or glutamine) chain promotes the hydrolysis of glutamine to ammonia, which is used by the large (or ammonia) chain to synthesize carbamoyl phosphate. Tetramer of heterodimers (alpha,beta)4. Requires Mg(2+) as cofactor. Mn(2+) is required as a cofactor.

The enzyme catalyses hydrogencarbonate + L-glutamine + 2 ATP + H2O = carbamoyl phosphate + L-glutamate + 2 ADP + phosphate + 2 H(+). It carries out the reaction hydrogencarbonate + NH4(+) + 2 ATP = carbamoyl phosphate + 2 ADP + phosphate + 2 H(+). Its pathway is amino-acid biosynthesis; L-arginine biosynthesis; carbamoyl phosphate from bicarbonate: step 1/1. It participates in pyrimidine metabolism; UMP biosynthesis via de novo pathway; (S)-dihydroorotate from bicarbonate: step 1/3. Its function is as follows. Large subunit of the glutamine-dependent carbamoyl phosphate synthetase (CPSase). CPSase catalyzes the formation of carbamoyl phosphate from the ammonia moiety of glutamine, carbonate, and phosphate donated by ATP, constituting the first step of 2 biosynthetic pathways, one leading to arginine and/or urea and the other to pyrimidine nucleotides. The large subunit (synthetase) binds the substrates ammonia (free or transferred from glutamine from the small subunit), hydrogencarbonate and ATP and carries out an ATP-coupled ligase reaction, activating hydrogencarbonate by forming carboxy phosphate which reacts with ammonia to form carbamoyl phosphate. The chain is Carbamoyl phosphate synthase large chain from Mycobacterium sp. (strain JLS).